Consider the following 671-residue polypeptide: Putative ubiquitin thioesterase 232R (671 aa).

Disordered stretches follow at residues E36–S62, S100–Q123, N171–F203, and E250–S319. A compositionally biased stretch (low complexity) spans P110–Q123. Residues R182–R200 are compositionally biased toward pro residues. A compositionally biased stretch (low complexity) spans S255–K271. The span at P272 to S319 shows a compositional bias: basic residues. One can recognise an OTU domain in the interval F392–F521. D400 is an active-site residue. The active-site Nucleophile is C403. H514 is an active-site residue. The segment at K589–P625 is disordered.

The enzyme catalyses Thiol-dependent hydrolysis of ester, thioester, amide, peptide and isopeptide bonds formed by the C-terminal Gly of ubiquitin (a 76-residue protein attached to proteins as an intracellular targeting signal).. Its function is as follows. Hydrolase that can remove conjugated ubiquitin from proteins and may therefore play an important regulatory role at the level of protein turnover by preventing degradation. In Acheta domesticus (House cricket), this protein is Putative ubiquitin thioesterase 232R.